Consider the following 124-residue polypeptide: MFKTILAVSAAGIAGTLLRFAAGTWVSANWPKHFYAATLAVNLVGCLIIGLLYGWFLLRPEVPIEIRAGLIVGFVGGLTTFSSFSLDTLRLLESGQALIAFGYLGISVFGGLLATWAGLSLTKL.

Transmembrane regions (helical) follow at residues I5–W25, T38–L58, G69–L89, and A97–A117. The Na(+) site is built by G76 and T79.

It belongs to the fluoride channel Fluc/FEX (TC 1.A.43) family.

It is found in the cell inner membrane. The catalysed reaction is fluoride(in) = fluoride(out). Na(+) is not transported, but it plays an essential structural role and its presence is essential for fluoride channel function. Functionally, fluoride-specific ion channel. Important for reducing fluoride concentration in the cell, thus reducing its toxicity. The chain is Fluoride-specific ion channel FluC from Pseudomonas fluorescens (strain SBW25).